Reading from the N-terminus, the 372-residue chain is Glutamate 5-kinase (372 aa).

ATP is bound at residue lysine 14. Substrate-binding residues include serine 54, aspartate 141, and asparagine 153. An ATP-binding site is contributed by 173–174 (TD). Residues 280 to 358 (RGTLVLDDGA…DAIEALLGYV (79 aa)) enclose the PUA domain.

Belongs to the glutamate 5-kinase family.

Its subcellular location is the cytoplasm. The enzyme catalyses L-glutamate + ATP = L-glutamyl 5-phosphate + ADP. It participates in amino-acid biosynthesis; L-proline biosynthesis; L-glutamate 5-semialdehyde from L-glutamate: step 1/2. Functionally, catalyzes the transfer of a phosphate group to glutamate to form L-glutamate 5-phosphate. This chain is Glutamate 5-kinase, found in Pseudomonas aeruginosa (strain UCBPP-PA14).